The following is a 214-amino-acid chain: ATP phosphoribosyltransferase (214 aa).

Belongs to the ATP phosphoribosyltransferase family. Short subfamily. As to quaternary structure, heteromultimer composed of HisG and HisZ subunits.

It is found in the cytoplasm. The catalysed reaction is 1-(5-phospho-beta-D-ribosyl)-ATP + diphosphate = 5-phospho-alpha-D-ribose 1-diphosphate + ATP. Its pathway is amino-acid biosynthesis; L-histidine biosynthesis; L-histidine from 5-phospho-alpha-D-ribose 1-diphosphate: step 1/9. Its function is as follows. Catalyzes the condensation of ATP and 5-phosphoribose 1-diphosphate to form N'-(5'-phosphoribosyl)-ATP (PR-ATP). Has a crucial role in the pathway because the rate of histidine biosynthesis seems to be controlled primarily by regulation of HisG enzymatic activity. In Halorhodospira halophila (strain DSM 244 / SL1) (Ectothiorhodospira halophila (strain DSM 244 / SL1)), this protein is ATP phosphoribosyltransferase.